Reading from the N-terminus, the 300-residue chain is N-acetylmuramic acid 6-phosphate etherase (300 aa).

One can recognise an SIS domain in the interval 57–220 (ITHAFAHGGR…TSGAMIRSGK (164 aa)). The active-site Proton donor is Glu85. Residue Glu116 is part of the active site.

The protein belongs to the GCKR-like family. MurNAc-6-P etherase subfamily. As to quaternary structure, homodimer.

The catalysed reaction is N-acetyl-D-muramate 6-phosphate + H2O = N-acetyl-D-glucosamine 6-phosphate + (R)-lactate. It participates in amino-sugar metabolism; 1,6-anhydro-N-acetylmuramate degradation. It functions in the pathway amino-sugar metabolism; N-acetylmuramate degradation. The protein operates within cell wall biogenesis; peptidoglycan recycling. Its function is as follows. Specifically catalyzes the cleavage of the D-lactyl ether substituent of MurNAc 6-phosphate, producing GlcNAc 6-phosphate and D-lactate. Together with AnmK, is also required for the utilization of anhydro-N-acetylmuramic acid (anhMurNAc) either imported from the medium or derived from its own cell wall murein, and thus plays a role in cell wall recycling. This chain is N-acetylmuramic acid 6-phosphate etherase, found in Vibrio vulnificus (strain CMCP6).